Consider the following 90-residue polypeptide: Probable Fe(2+)-trafficking protein (90 aa).

It belongs to the Fe(2+)-trafficking protein family.

Its function is as follows. Could be a mediator in iron transactions between iron acquisition and iron-requiring processes, such as synthesis and/or repair of Fe-S clusters in biosynthetic enzymes. The chain is Probable Fe(2+)-trafficking protein from Delftia acidovorans (strain DSM 14801 / SPH-1).